The following is a 559-amino-acid chain: CRISPR-associated exonuclease Cas4/endonuclease Cas1 fusion (559 aa).

Positions 1–198 are CRISPR-associated exonuclease Cas4; the sequence is MAETDGSIPL…RCSLVGICLP (198 aa). Position 22 (Cys-22) interacts with [4Fe-4S] cluster. Residues Asp-87 and Asp-100 each coordinate Mn(2+). [4Fe-4S] cluster contacts are provided by Cys-187, Cys-190, and Cys-196. The interval 224–559 is CRISPR-associated endonuclease Cas1; it reads LYVQSPKAYV…IPAYPNFVTR (336 aa). Glu-380, His-451, and Glu-466 together coordinate Mn(2+).

The protein in the N-terminal section; belongs to the CRISPR-associated exonuclease Cas4 family. In the C-terminal section; belongs to the CRISPR-associated endonuclease Cas1 family. In terms of assembly, homodimer, forms a heterotetramer with a Cas2 homodimer. Requires [4Fe-4S] cluster as cofactor. The cofactor is Mg(2+). Mn(2+) is required as a cofactor.

The catalysed reaction is exonucleolytic cleavage in the 5'- to 3'-direction to yield nucleoside 3'-phosphates.. In terms of biological role, CRISPR (clustered regularly interspaced short palindromic repeat), is an adaptive immune system that provides protection against mobile genetic elements (viruses, transposable elements and conjugative plasmids). CRISPR clusters contain spacers, sequences complementary to antecedent mobile elements, and target invading nucleic acids. CRISPR clusters are transcribed and processed into CRISPR RNA (crRNA). The Cas4 region acts as a ssDNA exonuclease, while the Cas1 region acts as a dsDNA endonuclease. Involved in the integration of spacer DNA into the CRISPR cassette. The sequence is that of CRISPR-associated exonuclease Cas4/endonuclease Cas1 fusion (cas4-cas1) from Geobacter sulfurreducens (strain ATCC 51573 / DSM 12127 / PCA).